The primary structure comprises 323 residues: Beta-ketoacyl-[acyl-carrier-protein] synthase III (323 aa).

Residues cysteine 113 and histidine 250 contribute to the active site. Residues 251-255 are ACP-binding; sequence QANKR. Asparagine 280 is a catalytic residue.

This sequence belongs to the thiolase-like superfamily. FabH family. In terms of assembly, homodimer.

The protein resides in the cytoplasm. It catalyses the reaction malonyl-[ACP] + acetyl-CoA + H(+) = 3-oxobutanoyl-[ACP] + CO2 + CoA. It functions in the pathway lipid metabolism; fatty acid biosynthesis. Functionally, catalyzes the condensation reaction of fatty acid synthesis by the addition to an acyl acceptor of two carbons from malonyl-ACP. Catalyzes the first condensation reaction which initiates fatty acid synthesis and may therefore play a role in governing the total rate of fatty acid production. Possesses both acetoacetyl-ACP synthase and acetyl transacylase activities. Its substrate specificity determines the biosynthesis of branched-chain and/or straight-chain of fatty acids. In Brucella melitensis biotype 2 (strain ATCC 23457), this protein is Beta-ketoacyl-[acyl-carrier-protein] synthase III.